A 218-amino-acid chain; its full sequence is Glutathione S-transferase Mu 1 (218 aa).

The GST N-terminal domain occupies 2-88 (PMILGYWDIR…YIARKHNLCG (87 aa)). Glutathione is bound by residues 7-8 (YW), 43-46 (RSQW), Lys-50, 59-60 (NL), and 72-73 (QS). In terms of domain architecture, GST C-terminal spans 90–208 (TEEEMIRVDI…KSSRFLPGPL (119 aa)). Residue Tyr-116 participates in substrate binding.

Belongs to the GST superfamily. Mu family. Homodimer.

It localises to the cytoplasm. It catalyses the reaction RX + glutathione = an S-substituted glutathione + a halide anion + H(+). It carries out the reaction prostaglandin A2 + glutathione = prostaglandin A2-S-(R)-glutathione. The catalysed reaction is prostaglandin J2 + glutathione = prostaglandin J2-S-(R)-glutathione. The enzyme catalyses prostaglandin J2 + glutathione = prostaglandin J2-S-(S)-glutathione. It catalyses the reaction prostaglandin A2 + glutathione = prostaglandin A2-S-(S)-glutathione. It carries out the reaction 11(S)-hydroxy-14(S),15(S)-epoxy-(5Z,8Z,12E)-eicosatrienoate + glutathione = (11S,15S)-dihydroxy-14(R)-S-glutathionyl-(5Z,8Z,12E)-eicosatrienoate. Functionally, conjugation of reduced glutathione to a wide number of exogenous and endogenous hydrophobic electrophiles. Protects against the thiol-mediated metal-catalyzed oxidative inactivation of enzymes. Involved in the formation of glutathione conjugates of both prostaglandin A2 (PGA2) and prostaglandin J2 (PGJ2). Participates in the formation of novel hepoxilin regioisomers. This is Glutathione S-transferase Mu 1 (GSTM1) from Bos taurus (Bovine).